Consider the following 803-residue polypeptide: Lon protease (803 aa).

Positions 9-202 (MPVLPLRDVV…YLLGMMESEA (194 aa)) constitute a Lon N-terminal domain. 356 to 363 (GPPGVGKT) contacts ATP. Residues 592–773 (QNRIGEVTGL…DEVLGFALEN (182 aa)) enclose the Lon proteolytic domain. Active-site residues include S679 and K722.

The protein belongs to the peptidase S16 family. In terms of assembly, homohexamer. Organized in a ring with a central cavity.

It is found in the cytoplasm. The enzyme catalyses Hydrolysis of proteins in presence of ATP.. Its function is as follows. ATP-dependent serine protease that mediates the selective degradation of mutant and abnormal proteins as well as certain short-lived regulatory proteins. Required for cellular homeostasis and for survival from DNA damage and developmental changes induced by stress. Degrades polypeptides processively to yield small peptide fragments that are 5 to 10 amino acids long. Binds to DNA in a double-stranded, site-specific manner. The sequence is that of Lon protease from Haemophilus influenzae (strain ATCC 51907 / DSM 11121 / KW20 / Rd).